A 438-amino-acid chain; its full sequence is L-cysteine:1D-myo-inositol 2-amino-2-deoxy-alpha-D-glucopyranoside ligase (438 aa).

The segment at 1 to 27 (MKSWSSRPVPELPGTGTAPRVHDTSTG) is disordered. Cys44 is a Zn(2+) binding site. Residues 44 to 47 (CGIT), Thr59, and 82 to 84 (NVT) contribute to the L-cysteinyl-5'-AMP site. Residues 46 to 56 (ITPYDATHMGH) carry the 'HIGH' region motif. The short motif at 208 to 213 (DHGGDP) is the 'ERGGDP' region element. Trp249 serves as a coordination point for L-cysteinyl-5'-AMP. Position 253 (Cys253) interacts with Zn(2+). 271 to 273 (GSD) lines the L-cysteinyl-5'-AMP pocket. A Zn(2+)-binding site is contributed by His278. Val304 is a binding site for L-cysteinyl-5'-AMP. A 'KMSKS' region motif is present at residues 310–314 (KMSKS).

The protein belongs to the class-I aminoacyl-tRNA synthetase family. MshC subfamily. Monomer. It depends on Zn(2+) as a cofactor.

The catalysed reaction is 1D-myo-inositol 2-amino-2-deoxy-alpha-D-glucopyranoside + L-cysteine + ATP = 1D-myo-inositol 2-(L-cysteinylamino)-2-deoxy-alpha-D-glucopyranoside + AMP + diphosphate + H(+). Functionally, catalyzes the ATP-dependent condensation of GlcN-Ins and L-cysteine to form L-Cys-GlcN-Ins. This chain is L-cysteine:1D-myo-inositol 2-amino-2-deoxy-alpha-D-glucopyranoside ligase, found in Kocuria rhizophila (strain ATCC 9341 / DSM 348 / NBRC 103217 / DC2201).